We begin with the raw amino-acid sequence, 268 residues long: Putative pyruvate, phosphate dikinase regulatory protein (268 aa).

147-154 contributes to the ADP binding site; it reads GLSRTSKT.

Belongs to the pyruvate, phosphate/water dikinase regulatory protein family. PDRP subfamily.

The catalysed reaction is N(tele)-phospho-L-histidyl/L-threonyl-[pyruvate, phosphate dikinase] + ADP = N(tele)-phospho-L-histidyl/O-phospho-L-threonyl-[pyruvate, phosphate dikinase] + AMP + H(+). It carries out the reaction N(tele)-phospho-L-histidyl/O-phospho-L-threonyl-[pyruvate, phosphate dikinase] + phosphate + H(+) = N(tele)-phospho-L-histidyl/L-threonyl-[pyruvate, phosphate dikinase] + diphosphate. In terms of biological role, bifunctional serine/threonine kinase and phosphorylase involved in the regulation of the pyruvate, phosphate dikinase (PPDK) by catalyzing its phosphorylation/dephosphorylation. The polypeptide is Putative pyruvate, phosphate dikinase regulatory protein (Clostridium beijerinckii (strain ATCC 51743 / NCIMB 8052) (Clostridium acetobutylicum)).